Consider the following 595-residue polypeptide: Wee1-like protein kinase 1-B (595 aa).

Residues 1 to 17 are compositionally biased toward polar residues; that stretch reads MNVQPRNMNVQPRNMNV. The tract at residues 1–127 is disordered; that stretch reads MNVQPRNMNV…CPGTPPHKTF (127 aa). A compositionally biased stretch (pro residues) spans 111 to 122; it reads PTSPIPECPGTP. T186 is modified (phosphothreonine; by cdk1). One can recognise a Protein kinase domain in the interval 248 to 518; the sequence is FHELEKIGSG…SVALVKHSVL (271 aa). Residues 254–262 and K277 each bind ATP; that span reads IGSGEFGSV. The active-site Proton acceptor is D375. 2 residues coordinate Mg(2+): N380 and D412. Residues 526-563 adopt a coiled-coil conformation; that stretch reads AEQLRIELDAEKFKNALLQKELKKAQIAKAAAEERAHF.

Belongs to the protein kinase superfamily. Ser/Thr protein kinase family. WEE1 subfamily. As to quaternary structure, interacts (when phosphorylated at Thr-186) with pin1. Phosphorylation at Thr-186 during M-phase by cdk1 inhibits the kinase activity and leads to interaction with pin1. As to expression, zygotically expressed. Present in oocytes and postgastrula embryos (at least until the tailbud stage). Expression begins at the midblastula stage and increases after the early gastrula stage.

It localises to the nucleus. The catalysed reaction is L-tyrosyl-[protein] + ATP = O-phospho-L-tyrosyl-[protein] + ADP + H(+). Its function is as follows. Acts as a zygotic negative regulator of entry into mitosis (G2 to M transition) by protecting the nucleus from cytoplasmically activated cyclin B1-complexed cdk1 before the onset of mitosis by mediating phosphorylation of cdk1 on 'Tyr-15'. Specifically phosphorylates and inactivates cyclin B1-complexed cdk1 reaching a maximum during G2 phase and a minimum as cells enter M phase. Phosphorylation of cyclin B1-cdk1 occurs exclusively on 'Tyr-15' and phosphorylation of monomeric cdk1 does not occur. In Xenopus laevis (African clawed frog), this protein is Wee1-like protein kinase 1-B (wee1-b).